The chain runs to 71 residues: DNA-directed RNA polymerase subunit epsilon (71 aa).

This sequence belongs to the RNA polymerase subunit epsilon family. As to quaternary structure, RNAP is composed of a core of 2 alpha, a beta and a beta' subunit. The core is associated with a delta subunit, and at least one of epsilon or omega. When a sigma factor is associated with the core the holoenzyme is formed, which can initiate transcription.

It catalyses the reaction RNA(n) + a ribonucleoside 5'-triphosphate = RNA(n+1) + diphosphate. Its function is as follows. A non-essential component of RNA polymerase (RNAP). This chain is DNA-directed RNA polymerase subunit epsilon, found in Anoxybacillus flavithermus (strain DSM 21510 / WK1).